A 310-amino-acid polypeptide reads, in one-letter code: Malate dehydrogenase (310 aa).

Residues 7 to 12 and aspartate 32 contribute to the NAD(+) site; that span reads GAGNVG. Residues arginine 81 and arginine 87 each contribute to the substrate site. NAD(+)-binding positions include asparagine 94 and 117-119; that span reads VSN. Residues asparagine 119 and arginine 150 each contribute to the substrate site. Residue histidine 174 is the Proton acceptor of the active site.

The protein belongs to the LDH/MDH superfamily. MDH type 3 family. Homotetramer; arranged as a dimer of dimers.

It carries out the reaction (S)-malate + NAD(+) = oxaloacetate + NADH + H(+). In terms of biological role, catalyzes the reversible oxidation of malate to oxaloacetate. The protein is Malate dehydrogenase of Chlorobaculum parvum (strain DSM 263 / NCIMB 8327) (Chlorobium vibrioforme subsp. thiosulfatophilum).